An 892-amino-acid polypeptide reads, in one-letter code: E3 ubiquitin ligase PQT3-like (892 aa).

Residues 3-76 form the DWNN domain; that stretch reads IYYKFKSARD…NTSVLIRRVP (74 aa). The CCHC-type zinc finger occupies 210 to 224; it reads CHRCNIPGHFIQHCP. A Phosphoserine modification is found at Ser285. Residues 295–333 form an RING-type; degenerate zinc finger; that stretch reads CPLCKEVMKDAALTSKCCYKSFCDKCIRDHIISKSMCVC. 3 disordered regions span residues 375–408, 459–493, and 623–892; these read DLES…NNND, TQAP…MQWN, and MLRK…RSRA. Ser404 carries the post-translational modification Phosphoserine. A compositionally biased stretch (basic and acidic residues) spans 623 to 644; the sequence is MLRKRENERRPEGGKMFRDGEN. Residues 647 to 666 show a composition bias toward polar residues; sequence MMMNNGTSASASSINPNKSR. Residues 674 to 692 are compositionally biased toward basic and acidic residues; sequence HDYDRRRRPEKRLSPEHPP. The Nuclear localization signal signature appears at 693 to 700; sequence TRKNISPS. The span at 708–745 shows a compositional bias: basic and acidic residues; the sequence is ERYPDERDRQRDRERSRHQDVDREHDRTRDRRDEDRSR. Over residues 810–832 the composition is skewed to low complexity; it reads SSSSTSVTDPSASASAAAAVGTS. Ser866 is subject to Phosphoserine. Positions 875-892 are enriched in basic and acidic residues; that stretch reads SEDKLRYSKRGKGERSRA.

The protein resides in the nucleus. It carries out the reaction S-ubiquitinyl-[E2 ubiquitin-conjugating enzyme]-L-cysteine + [acceptor protein]-L-lysine = [E2 ubiquitin-conjugating enzyme]-L-cysteine + N(6)-ubiquitinyl-[acceptor protein]-L-lysine.. The polypeptide is E3 ubiquitin ligase PQT3-like (Arabidopsis thaliana (Mouse-ear cress)).